The sequence spans 127 residues: Profilin (127 aa).

It belongs to the profilin family. In terms of assembly, occurs in many kinds of cells as a complex with monomeric actin in a 1:1 ratio.

The protein localises to the cytoplasm. Its subcellular location is the cytoskeleton. Binds to actin and affects the structure of the cytoskeleton. At high concentrations, profilin prevents the polymerization of actin, whereas it enhances it at low concentrations. By binding to PIP2, it inhibits the formation of IP3 and DG. In S.pombe, it is essential for cytokinesis. The protein is Profilin (cdc3) of Schizosaccharomyces pombe (strain 972 / ATCC 24843) (Fission yeast).